The following is a 75-amino-acid chain: Protein B7 (75 aa).

This is Protein B7 (B7) from Human herpesvirus 6B (strain Z29) (HHV-6 variant B).